The following is a 384-amino-acid chain: Na(+)/H(+) antiporter NhaA (384 aa).

11 helical membrane passes run 9–29 (NLET…IIIA), 58–78 (LLLW…GLEI), 94–114 (LVPA…FIFF), 124–144 (GWAI…SLLG), 153–173 (ILLT…IALF), 179–199 (SLLS…LNYF), 204–224 (ISVF…SGVH), 256–276 (VVFL…FVGL), 285–305 (VVLG…FLSL), 325–345 (VYGI…IGSL), and 357–377 (MVKI…FLVL).

Belongs to the NhaA Na(+)/H(+) (TC 2.A.33) antiporter family.

It is found in the cell inner membrane. The enzyme catalyses Na(+)(in) + 2 H(+)(out) = Na(+)(out) + 2 H(+)(in). Na(+)/H(+) antiporter that extrudes sodium in exchange for external protons. This is Na(+)/H(+) antiporter NhaA from Legionella pneumophila (strain Lens).